Consider the following 258-residue polypeptide: uncharacterized protein (258 aa).

Transmembrane regions (helical) follow at residues 38 to 58, 72 to 92, and 111 to 131; these read VFGL…LFIA, ALIF…IIFI, and FLVI…MLWW.

It is found in the cell membrane. This is an uncharacterized protein from Mycoplasma pneumoniae (strain ATCC 29342 / M129 / Subtype 1) (Mycoplasmoides pneumoniae).